The sequence spans 212 residues: Regulatory protein RecX (212 aa).

This sequence belongs to the RecX family.

It is found in the cytoplasm. Functionally, modulates RecA activity. This Clostridium botulinum (strain Alaska E43 / Type E3) protein is Regulatory protein RecX.